The primary structure comprises 526 residues: Fusicoccadiene 8-ol C-16-hydroxylase (526 aa).

Residues 34-56 (AFVGFSVLGLTLLFSKLFYNAYL) traverse the membrane as a helical segment. N-linked (GlcNAc...) asparagine glycosylation is found at Asn309, Asn418, and Asn434. Cys470 provides a ligand contact to heme.

It belongs to the cytochrome P450 family. Heme serves as cofactor.

Its subcellular location is the membrane. The protein operates within mycotoxin biosynthesis. Functionally, cytochrome P450 monooxygenase; part of the 2 gene clusters that mediate the biosynthesis of fusicoccins, diterpene glucosides that display phytohormone-like activity and function as potent activators of plasma membrane H(+)-ATPases in plants by modifying 14-3-3 proteins and cause the plant disease constriction canker. The first step in the pathway is performed by the fusicoccadiene synthase PaFS that possesses both prenyl transferase and terpene cyclase activity, converting isopentenyl diphosphate and dimethylallyl diphosphate into geranylgeranyl diphosphate (GGDP) and successively converting GGDP into fusicocca-2,10(14)-diene, a precursor for fusicoccin H. The second step is the oxidation at the C-8 position by the cytochrome P450 monooxygenase PaP450-2 to yield fusicocca-2,10(14)-diene-8-beta-ol. The cytochrome P450 monooxygenase PaP450-1 then catalyzes the hydroxylation at the C-16 position to produce fusicocca-2,10(14)-diene-8-beta,16-diol. The dioxygenase fc-dox then catalyzes the 16-oxydation of fusicocca-2,10(14)-diene-8-beta,16-diol to yield an aldehyde (8-beta-hydroxyfusicocca-1,10(14)-dien-16-al). The short-chain dehydrogenase/reductase fc-sdr catalyzes the reduction of the aldehyde to yield fusicocca-1,10(14)-diene-8-beta,16-diol. The next step is the hydroxylation at C-9 performed by the cytochrome P450 monooxygenase PaP450-3 that leads to fusicoccin H aglycon which is glycosylated to fusicoccin H by the O-glycosyltransferase PaGT. Hydroxylation at C-12 by the cytochrome P450 monooxygenase PaP450-4 leads then to the production of fusicoccin Q and is followed by methylation by the O-methyltransferase PaMT to yield fusicoccin P. Fusicoccin P is further converted to fusicoccin J via prenylation by the O-glucose prenyltransferase PaPT. Cytochrome P450 monooxygenase PaP450-5 then performs hydroxylation at C-19 to yield dideacetyl-fusicoccin A which is acetylated to 3'-O-deacetyl-fusicoccin A by the O-acetyltransferase PaAT-2. Finally, a another acetylation by the O-acetyltransferase PaAT-1 yields fusicoccin A. The polypeptide is Fusicoccadiene 8-ol C-16-hydroxylase (Phomopsis amygdali (Fusicoccum amygdali)).